The chain runs to 89 residues: Small ribosomal subunit protein uS15 (89 aa).

Belongs to the universal ribosomal protein uS15 family. As to quaternary structure, part of the 30S ribosomal subunit. Forms a bridge to the 50S subunit in the 70S ribosome, contacting the 23S rRNA.

In terms of biological role, one of the primary rRNA binding proteins, it binds directly to 16S rRNA where it helps nucleate assembly of the platform of the 30S subunit by binding and bridging several RNA helices of the 16S rRNA. Forms an intersubunit bridge (bridge B4) with the 23S rRNA of the 50S subunit in the ribosome. The protein is Small ribosomal subunit protein uS15 of Arthrobacter sp. (strain FB24).